Consider the following 434-residue polypeptide: Adenylosuccinate synthetase (434 aa).

Residues Gly-25–Lys-31 and Gly-53–Thr-55 each bind GTP. The active-site Proton acceptor is the Asp-26. 2 residues coordinate Mg(2+): Asp-26 and Gly-53. IMP is bound by residues Asp-26 to Lys-29, Asn-51 to His-54, Thr-142, Arg-156, Asn-233, Thr-248, and Arg-312. His-54 functions as the Proton donor in the catalytic mechanism. A substrate-binding site is contributed by Val-308–Arg-314. GTP-binding positions include Arg-314, Lys-340–Asp-342, and Gly-422–Gly-424.

This sequence belongs to the adenylosuccinate synthetase family. In terms of assembly, homodimer. Requires Mg(2+) as cofactor.

The protein localises to the cytoplasm. The catalysed reaction is IMP + L-aspartate + GTP = N(6)-(1,2-dicarboxyethyl)-AMP + GDP + phosphate + 2 H(+). The protein operates within purine metabolism; AMP biosynthesis via de novo pathway; AMP from IMP: step 1/2. With respect to regulation, competitively Inhibited by GMP. Allosterically inhibited by AMP. In terms of biological role, plays an important role in the de novo pathway and in the salvage pathway of purine nucleotide biosynthesis. Catalyzes the first committed step in the biosynthesis of AMP from IMP. The sequence is that of Adenylosuccinate synthetase (ade2) from Schizosaccharomyces pombe (strain 972 / ATCC 24843) (Fission yeast).